The chain runs to 333 residues: MSNDTQPKIAIIGYGSQGRAHALNLRDSGFDVTVGLRAGGPTEAKAQADGFIVVAPSEAVKSADLVAILTPDMVQKKLYEEVIAPNMKQGACLLFAHGLNVHFDMIKPRADLDVVLVAPKGPGALVRREYEIGRGVPCIYAVYQDTSGKAEQFALTYAGGLGGARANIIKTTFKEETETDLFGEQAVLCGGASSLVQAGFEVLVEAGYQPEIAYYEVLHELKLIVDLFYEGGITRMLEFVSETAQYGDYVSGPRVIDAGTKARMKDVLTDIQNGTFTKNWVAEYDAGLPNYNKFKQADLEHPIEEVGKKLRAKMVWLNGQQQAAAAPANQQAA.

The KARI N-terminal Rossmann domain occupies 1–171 (MSNDTQPKIA…GGARANIIKT (171 aa)). Residues 14-17 (YGSQ), R37, T42, and 72-75 (DMVQ) each bind NADP(+). H97 is a catalytic residue. G123 provides a ligand contact to NADP(+). In terms of domain architecture, KARI C-terminal knotted spans 172-317 (TFKEETETDL…KKLRAKMVWL (146 aa)). 4 residues coordinate Mg(2+): D180, E184, E216, and E220. S241 is a substrate binding site.

Belongs to the ketol-acid reductoisomerase family. Mg(2+) serves as cofactor.

The catalysed reaction is (2R)-2,3-dihydroxy-3-methylbutanoate + NADP(+) = (2S)-2-acetolactate + NADPH + H(+). It carries out the reaction (2R,3R)-2,3-dihydroxy-3-methylpentanoate + NADP(+) = (S)-2-ethyl-2-hydroxy-3-oxobutanoate + NADPH + H(+). It functions in the pathway amino-acid biosynthesis; L-isoleucine biosynthesis; L-isoleucine from 2-oxobutanoate: step 2/4. The protein operates within amino-acid biosynthesis; L-valine biosynthesis; L-valine from pyruvate: step 2/4. Functionally, involved in the biosynthesis of branched-chain amino acids (BCAA). Catalyzes an alkyl-migration followed by a ketol-acid reduction of (S)-2-acetolactate (S2AL) to yield (R)-2,3-dihydroxy-isovalerate. In the isomerase reaction, S2AL is rearranged via a Mg-dependent methyl migration to produce 3-hydroxy-3-methyl-2-ketobutyrate (HMKB). In the reductase reaction, this 2-ketoacid undergoes a metal-dependent reduction by NADPH to yield (R)-2,3-dihydroxy-isovalerate. The polypeptide is Ketol-acid reductoisomerase (NADP(+)) (Xanthomonas euvesicatoria pv. vesicatoria (strain 85-10) (Xanthomonas campestris pv. vesicatoria)).